Reading from the N-terminus, the 325-residue chain is Olfactory receptor 6Y1 (325 aa).

The Extracellular segment spans residues 1–30; sequence MTTIILEVDNHTVTTRFILLGFPTRPAFQL. Asparagine 10 is a glycosylation site (N-linked (GlcNAc...) asparagine). The chain crosses the membrane as a helical span at residues 31-51; the sequence is LFFSIFLATYLLTLLENLLII. The Cytoplasmic portion of the chain corresponds to 52 to 59; the sequence is LAIHSDGQ. Residues 60 to 80 form a helical membrane-spanning segment; it reads LHKPMYFFLSHLSFLEMWYVT. The Extracellular portion of the chain corresponds to 81-104; the sequence is VISPKMLVDFLSHDKSISFNGCMT. Residues cysteine 102 and cysteine 194 are joined by a disulfide bond. The chain crosses the membrane as a helical span at residues 105-125; that stretch reads QLYFFVTFVCTEYILLAIMAF. Over 126-144 the chain is Cytoplasmic; that stretch reads DRYVAICNPLRYPVIMTNQ. Residues 145–165 traverse the membrane as a helical segment; the sequence is LCGTLAGGCWFCGLMTAMIKM. Residues 166 to 202 lie on the Extracellular side of the membrane; it reads VFIAQLHYCGMPQINHYFCDISPLLNVSCEDASQAEM. The N-linked (GlcNAc...) asparagine glycan is linked to asparagine 191. Residues 203–222 form a helical membrane-spanning segment; the sequence is VDFFLALMVIAIPLCVVVAS. Residues 223-242 are Cytoplasmic-facing; it reads YAAILATILRIPSAQGRQKA. The chain crosses the membrane as a helical span at residues 243-263; sequence FSTCASHLTVVILFYSMTLFT. Residues 264-276 lie on the Extracellular side of the membrane; the sequence is YARPKLMYAYNSN. The helical transmembrane segment at 277 to 297 threads the bilayer; that stretch reads KVVSVLYTVIVPLLNPIIYCL. At 298–325 the chain is on the cytoplasmic side; that stretch reads RNHEVKAALRKTIHCRGSGPQGNGAFSS.

The protein belongs to the G-protein coupled receptor 1 family.

The protein resides in the cell membrane. Odorant receptor. The polypeptide is Olfactory receptor 6Y1 (OR6Y1) (Homo sapiens (Human)).